Reading from the N-terminus, the 84-residue chain is U-scoloptoxin(10)-Er1a (84 aa).

Positions 1–24 are cleaved as a signal peptide; sequence MSRFCLLFVAFGFVLYFLHMEVTG.

The protein belongs to the scoloptoxin-10 family. In terms of processing, contains 3 disulfide bonds. As to expression, expressed by the venom gland.

Its subcellular location is the secreted. This is U-scoloptoxin(10)-Er1a from Ethmostigmus rubripes (Giant centipede).